The sequence spans 170 residues: Phosphopantetheine adenylyltransferase (170 aa).

Serine 14 is a substrate binding site. Residues serine 14–phenylalanine 15 and histidine 22 each bind ATP. Residues lysine 46, leucine 79, and arginine 93 each coordinate substrate. Residues glycine 94 to arginine 96, glutamate 104, and isoleucine 129 to threonine 135 each bind ATP.

Belongs to the bacterial CoaD family. In terms of assembly, homohexamer. It depends on Mg(2+) as a cofactor.

The protein localises to the cytoplasm. The catalysed reaction is (R)-4'-phosphopantetheine + ATP + H(+) = 3'-dephospho-CoA + diphosphate. It participates in cofactor biosynthesis; coenzyme A biosynthesis; CoA from (R)-pantothenate: step 4/5. In terms of biological role, reversibly transfers an adenylyl group from ATP to 4'-phosphopantetheine, yielding dephospho-CoA (dPCoA) and pyrophosphate. This is Phosphopantetheine adenylyltransferase from Neisseria meningitidis serogroup C (strain 053442).